Consider the following 135-residue polypeptide: uncharacterized protein (135 aa).

This is an uncharacterized protein from Saccharomyces cerevisiae (strain ATCC 204508 / S288c) (Baker's yeast).